Consider the following 770-residue polypeptide: Glutamate carboxypeptidase 2 homolog (770 aa).

Topologically, residues 1–25 are cytoplasmic; sequence MPYVGVGAQTVSTSLTGAPMVKAYI. The helical; Signal-anchor for type II membrane protein transmembrane segment at 26-42 threads the bilayer; sequence AIAASLIFVFCIAALGV. The Extracellular portion of the chain corresponds to 43 to 770; it reads HHSERKFNKF…CVVNTLRDVI (728 aa). Residues N175 and N337 are each glycosylated (N-linked (GlcNAc...) asparagine). A catalytic region spans residues 282-597; that stretch reads SKKELFKGRT…QYWAELAKTF (316 aa). 2 residues coordinate Zn(2+): H387 and D397. N417 carries N-linked (GlcNAc...) asparagine glycosylation. Catalysis depends on E435, which acts as the Nucleophile. 2 residues coordinate Zn(2+): E436 and D464. Residues N469, N546, and N551 are each glycosylated (N-linked (GlcNAc...) asparagine). H562 provides a ligand contact to Zn(2+). Residues N579, N606, and N630 are each glycosylated (N-linked (GlcNAc...) asparagine).

The protein belongs to the peptidase M28 family. M28B subfamily. Zn(2+) serves as cofactor.

Its subcellular location is the membrane. The catalysed reaction is Release of an unsubstituted, C-terminal glutamyl residue, typically from Ac-Asp-Glu or folylpoly-gamma-glutamates.. The sequence is that of Glutamate carboxypeptidase 2 homolog from Caenorhabditis elegans.